The chain runs to 867 residues: Transcription factor E2F8 (867 aa).

Positions 38–58 (DFGPLTTPTKPKEGSQGEPWT) are disordered. 2 positions are modified to phosphoserine: Ser-71 and Ser-102. 2 DNA-binding regions span residues 113-182 (RKEK…TWHG) and 261-347 (RKDK…KWTG). Disordered stretches follow at residues 408-432 (RRKI…NSAP), 532-616 (QSVT…SGSK), and 771-800 (APEN…GQSV). Residues Ser-413 and Ser-417 each carry the phosphoserine modification. Polar residues-rich tracts occupy residues 413–432 (SAPS…NSAP) and 532–556 (QSVT…TGSK). The segment covering 557–567 (DSTDATTEKAA) has biased composition (basic and acidic residues). The segment covering 568 to 579 (NDTSKASASTRP) has biased composition (polar residues). The span at 594-604 (RTREPAGERGS) shows a compositional bias: basic and acidic residues. Residues 775-800 (AGTQQGRATNYDSPVPGQSQPNGQSV) show a composition bias toward polar residues.

Belongs to the E2F/DP family. Homodimer and heterodimer: mainly forms homodimers and, to a lesser extent, heterodimers with E2F8. Dimerization is important for DNA-binding. Interacts with HIF1A.

The protein localises to the nucleus. Atypical E2F transcription factor that participates in various processes such as angiogenesis and polyploidization of specialized cells. Mainly acts as a transcription repressor that binds DNA independently of DP proteins and specifically recognizes the E2 recognition site 5'-TTTC[CG]CGC-3'. Directly represses transcription of classical E2F transcription factors such as E2F1: component of a feedback loop in S phase by repressing the expression of E2F1, thereby preventing p53/TP53-dependent apoptosis. Plays a key role in polyploidization of cells in placenta and liver by regulating the endocycle, probably by repressing genes promoting cytokinesis and antagonizing action of classical E2F proteins (E2F1, E2F2 and/or E2F3). Required for placental development by promoting polyploidization of trophoblast giant cells. Acts as a promoter of sprouting angiogenesis, possibly by acting as a transcription activator: associates with HIF1A, recognizes and binds the VEGFA promoter, which is different from canonical E2 recognition site, and activates expression of the VEGFA gene. The sequence is that of Transcription factor E2F8 (E2F8) from Homo sapiens (Human).